A 478-amino-acid chain; its full sequence is Chromosomal replication initiator protein DnaA (478 aa).

Positions 1–82 (MHTMNKTAES…ELGKNAKLLY (82 aa)) are domain I, interacts with DnaA modulators. Residues 82–140 (YKIKMENTYGNKLPFTEQLPSAHRSPVRTQEIDVPVQQKNPELRNPFIIPGIRNLKIES) form a domain II region. A domain III, AAA+ region region spans residues 141–358 (QLNANYSFDN…GAIISLIAQS (218 aa)). ATP is bound by residues glycine 186, glycine 188, lysine 189, and threonine 190. Residues 359–478 (SFNKKEVTLE…VDDINKKLSL (120 aa)) are domain IV, binds dsDNA.

Belongs to the DnaA family. As to quaternary structure, oligomerizes as a right-handed, spiral filament on DNA at oriC.

It localises to the cytoplasm. In terms of biological role, plays an essential role in the initiation and regulation of chromosomal replication. ATP-DnaA binds to the origin of replication (oriC) to initiate formation of the DNA replication initiation complex once per cell cycle. Binds the DnaA box (a 9 base pair repeat at the origin) and separates the double-stranded (ds)DNA. Forms a right-handed helical filament on oriC DNA; dsDNA binds to the exterior of the filament while single-stranded (ss)DNA is stabiized in the filament's interior. The ATP-DnaA-oriC complex binds and stabilizes one strand of the AT-rich DNA unwinding element (DUE), permitting loading of DNA polymerase. After initiation quickly degrades to an ADP-DnaA complex that is not apt for DNA replication. Binds acidic phospholipids. The protein is Chromosomal replication initiator protein DnaA of Flavobacterium psychrophilum (strain ATCC 49511 / DSM 21280 / CIP 103535 / JIP02/86).